We begin with the raw amino-acid sequence, 201 residues long: Large ribosomal subunit protein uL4 (201 aa).

The disordered stretch occupies residues 39-70 (GRQGTKAQKTRSEVSGGGKKPWRQKGTGRARA).

The protein belongs to the universal ribosomal protein uL4 family. In terms of assembly, part of the 50S ribosomal subunit.

One of the primary rRNA binding proteins, this protein initially binds near the 5'-end of the 23S rRNA. It is important during the early stages of 50S assembly. It makes multiple contacts with different domains of the 23S rRNA in the assembled 50S subunit and ribosome. Its function is as follows. Forms part of the polypeptide exit tunnel. In Marinobacter nauticus (strain ATCC 700491 / DSM 11845 / VT8) (Marinobacter aquaeolei), this protein is Large ribosomal subunit protein uL4.